We begin with the raw amino-acid sequence, 419 residues long: Adenylosuccinate synthetase (419 aa).

GTP contacts are provided by residues 11–17 (GDEGKGK) and 39–41 (GHT). The active-site Proton acceptor is D12. 2 residues coordinate Mg(2+): D12 and G39. Residues 12 to 15 (DEGK), 37 to 40 (NAGH), T129, R143, N218, T233, and R297 contribute to the IMP site. H40 (proton donor) is an active-site residue. 293–299 (VTTGRKR) provides a ligand contact to substrate. GTP is bound by residues R299, 325–327 (KLD), and 407–409 (GTG).

This sequence belongs to the adenylosuccinate synthetase family. In terms of assembly, homodimer. Mg(2+) is required as a cofactor.

The protein resides in the cytoplasm. The enzyme catalyses IMP + L-aspartate + GTP = N(6)-(1,2-dicarboxyethyl)-AMP + GDP + phosphate + 2 H(+). It participates in purine metabolism; AMP biosynthesis via de novo pathway; AMP from IMP: step 1/2. In terms of biological role, plays an important role in the de novo pathway and in the salvage pathway of purine nucleotide biosynthesis. Catalyzes the first committed step in the biosynthesis of AMP from IMP. The protein is Adenylosuccinate synthetase of Coccidioides posadasii (strain C735) (Valley fever fungus).